Reading from the N-terminus, the 559-residue chain is DDB1- and CUL4-associated factor 10 (559 aa).

The tract at residues 1-119 (MFPFGPHSPG…HGLGAGLGGP (119 aa)) is disordered. Residues S53, S63, S89, and S92 each carry the phosphoserine modification. Residues 56 to 86 (RPGAPSLSPAPRSGELGLPGAPESSTASAPG) are compositionally biased toward low complexity. The segment covering 87–97 (EPSPPSPPCRR) has biased composition (pro residues). R134 is subject to Omega-N-methylarginine. 4 WD repeats span residues 166-205 (RTHGAVFNLEYSPDGSVLTVACEQTEVLLFDPISSKHIKT), 209-247 (AHEDCVNNIRFLDNRLFATCSDDTTIALWDLRKLNTKVC), 251-290 (GHTSWVKNIEYDTNTRLLVTSGFDGNVIIWDTNRYTEDGC), and 296-335 (FHTRFLMRMRLTPDCSKMLISTSSGYLLILHDLDLTKSLE). S349 bears the Phosphoserine mark. Residues 350-367 (SSDLTTSSSSSGPRVSGS) show a composition bias toward low complexity. Positions 350-396 (SSDLTTSSSSSGPRVSGSPCHHSDSNSSEKHMSRASQREGVSPRNSL) are disordered. Residues 370-381 (HHSDSNSSEKHM) show a composition bias toward basic and acidic residues. WD repeat units follow at residues 408 to 448 (DHGN…QEGA), 470 to 508 (VGRGYIKELCFSPDGRMISSPHGYGIRLLGFDKQCSELV), and 526 to 559 (SHNDVVLTTKFSPTHCQIASGCLSGRVSLYQPKF).

This sequence belongs to the WD repeat DCAF10 family. In terms of assembly, interacts with DDB1.

The protein operates within protein modification; protein ubiquitination. Its function is as follows. May function as a substrate receptor for CUL4-DDB1 E3 ubiquitin-protein ligase complex. This Homo sapiens (Human) protein is DDB1- and CUL4-associated factor 10 (DCAF10).